The chain runs to 466 residues: Glutamate decarboxylase alpha (466 aa).

Residues threonine 62 and asparagine 83 each coordinate substrate. Residues serine 126–serine 127, threonine 212, and histidine 275 each bind pyridoxal 5'-phosphate. Lysine 276 carries the post-translational modification N6-(pyridoxal phosphate)lysine.

It belongs to the group II decarboxylase family. As to quaternary structure, homohexamer. Requires pyridoxal 5'-phosphate as cofactor.

It catalyses the reaction L-glutamate + H(+) = 4-aminobutanoate + CO2. Converts glutamate to gamma-aminobutyrate (GABA), consuming one intracellular proton in the reaction. The gad system helps to maintain a near-neutral intracellular pH when cells are exposed to extremely acidic conditions. The ability to survive transit through the acidic conditions of the stomach is essential for successful colonization of the mammalian host by commensal and pathogenic bacteria. In Escherichia coli O6:H1 (strain CFT073 / ATCC 700928 / UPEC), this protein is Glutamate decarboxylase alpha (gadA).